A 120-amino-acid polypeptide reads, in one-letter code: uncharacterized protein (120 aa).

One can recognise a VOC domain in the interval 4-120; sequence QIGTVAVYVE…EDGNVFLLKE (117 aa).

This is an uncharacterized protein from Bacillus subtilis (strain 168).